A 556-amino-acid chain; its full sequence is Oxygen-dependent choline dehydrogenase (556 aa).

4–33 is a binding site for FAD; it reads DYIIIGAGSAGNVLATRLTEDPNTTVLLLE. The active-site Proton acceptor is the histidine 473.

This sequence belongs to the GMC oxidoreductase family. It depends on FAD as a cofactor.

It localises to the cell membrane. It carries out the reaction choline + A = betaine aldehyde + AH2. It catalyses the reaction betaine aldehyde + NAD(+) + H2O = glycine betaine + NADH + 2 H(+). Its pathway is amine and polyamine biosynthesis; betaine biosynthesis via choline pathway; betaine aldehyde from choline (cytochrome c reductase route): step 1/1. In terms of biological role, involved in the biosynthesis of the osmoprotectant glycine betaine. Catalyzes the oxidation of choline to betaine aldehyde and betaine aldehyde to glycine betaine at the same rate. This is Oxygen-dependent choline dehydrogenase from Escherichia coli O6:H1 (strain CFT073 / ATCC 700928 / UPEC).